The following is a 287-amino-acid chain: Energy-coupling factor transporter ATP-binding protein EcfA2 (287 aa).

Positions 3-246 constitute an ABC transporter domain; sequence VKFSQVSYVY…TNYVNQLHLD (244 aa). 40-47 lines the ATP pocket; that stretch reads GQTGSGKS.

Belongs to the ABC transporter superfamily. Energy-coupling factor EcfA family. Forms a stable energy-coupling factor (ECF) transporter complex composed of 2 membrane-embedded substrate-binding proteins (S component), 2 ATP-binding proteins (A component) and 2 transmembrane proteins (T component).

It localises to the cell membrane. Functionally, ATP-binding (A) component of a common energy-coupling factor (ECF) ABC-transporter complex. Unlike classic ABC transporters this ECF transporter provides the energy necessary to transport a number of different substrates. The polypeptide is Energy-coupling factor transporter ATP-binding protein EcfA2 (Staphylococcus saprophyticus subsp. saprophyticus (strain ATCC 15305 / DSM 20229 / NCIMB 8711 / NCTC 7292 / S-41)).